Reading from the N-terminus, the 505-residue chain is UDP-N-acetylglucosamine diphosphorylase 1 (505 aa).

The segment covering 1–10 has biased composition (basic and acidic residues); the sequence is MIEPSMEREN. Residues 1–32 are disordered; the sequence is MIEPSMERENGALTAATTTTTAVTSPPPMASS. The segment covering 14–24 has biased composition (low complexity); that stretch reads TAATTTTTAVT. Positions 134–137 match the Substrate binding motif; it reads LSGG. N253 lines the substrate pocket. The Substrate binding motif lies at 335–336; that stretch reads EY. Position 432 (K432) interacts with substrate.

The protein belongs to the UDPGP type 1 family. As to quaternary structure, monomer. Mg(2+) is required as a cofactor. It depends on Mn(2+) as a cofactor. In terms of tissue distribution, expressed in root tips, stipules and mature pollen grains.

It carries out the reaction N-acetyl-alpha-D-glucosamine 1-phosphate + UTP + H(+) = UDP-N-acetyl-alpha-D-glucosamine + diphosphate. The enzyme catalyses N-acetyl-alpha-D-galactosamine 1-phosphate + UTP + H(+) = UDP-N-acetyl-alpha-D-galactosamine + diphosphate. It functions in the pathway nucleotide-sugar biosynthesis; UDP-N-acetyl-alpha-D-glucosamine biosynthesis; UDP-N-acetyl-alpha-D-glucosamine from N-acetyl-alpha-D-glucosamine 1-phosphate: step 1/1. With respect to regulation, inhibited by hygromycin and streptomycin, but not by gentamycin or kanamycin. Functionally, uridylyltransferase involved in the biosynthesis of UDP-glucosamine, an essential precursor for glycoprotein and glycolipid synthesis. Can use both UDP-glucosamine and the 4-epimer UDP-galactosamine as substrates, but no other sugars or NTPs. Acts redundantly with GLCNAC1PUT2. Required for gametogenesis and embryo development. The chain is UDP-N-acetylglucosamine diphosphorylase 1 (GLCNAC1PUT1) from Arabidopsis thaliana (Mouse-ear cress).